Reading from the N-terminus, the 390-residue chain is Phosphopentomutase (390 aa).

The Mn(2+) site is built by aspartate 11, aspartate 283, histidine 288, aspartate 324, histidine 325, and histidine 336.

Belongs to the phosphopentomutase family. Mn(2+) is required as a cofactor.

It is found in the cytoplasm. It carries out the reaction 2-deoxy-alpha-D-ribose 1-phosphate = 2-deoxy-D-ribose 5-phosphate. The catalysed reaction is alpha-D-ribose 1-phosphate = D-ribose 5-phosphate. The protein operates within carbohydrate degradation; 2-deoxy-D-ribose 1-phosphate degradation; D-glyceraldehyde 3-phosphate and acetaldehyde from 2-deoxy-alpha-D-ribose 1-phosphate: step 1/2. In terms of biological role, isomerase that catalyzes the conversion of deoxy-ribose 1-phosphate (dRib-1-P) and ribose 1-phosphate (Rib-1-P) to deoxy-ribose 5-phosphate (dRib-5-P) and ribose 5-phosphate (Rib-5-P), respectively. The protein is Phosphopentomutase of Clostridium acetobutylicum (strain ATCC 824 / DSM 792 / JCM 1419 / IAM 19013 / LMG 5710 / NBRC 13948 / NRRL B-527 / VKM B-1787 / 2291 / W).